The following is a 382-amino-acid chain: Ribosomal RNA large subunit methyltransferase G (382 aa).

The protein belongs to the methyltransferase superfamily. RlmG family.

It localises to the cytoplasm. The enzyme catalyses guanosine(1835) in 23S rRNA + S-adenosyl-L-methionine = N(2)-methylguanosine(1835) in 23S rRNA + S-adenosyl-L-homocysteine + H(+). Functionally, specifically methylates the guanine in position 1835 (m2G1835) of 23S rRNA. In Psychromonas ingrahamii (strain DSM 17664 / CCUG 51855 / 37), this protein is Ribosomal RNA large subunit methyltransferase G.